The sequence spans 683 residues: MTKSQRKILVTSALPYANGPIHLGHMLEYIQTDIWSRFQKLRGHECHYICADDAHGTPIMLKAQQMGITPEEMIAQVQKEHQQDFADFNIQFDNFHSTHSEENRILASDIYLKLRDGGYIKTKTISQLYDPEKLMFLPDRFVKGTCPKCKSEDQYGDNCDNCGATYSTTDLINPKSAVSGATPIMKDTEHFFFDLPAFEGMLKEWIQSGSLQQEMANKLNEWFEQGLKQWDISRDAPYFGFEIPDAPGKFFYVWLDAPIGYMGSFKNLCDKRDDLNFDDFWSLDSTAEVYHFIGKDIVYFHSLFWPAMLEGAGIRKPTSVYAHGYVTVNGSKMSKSKGTFIKARTYLDNLDPEYLRYYYAAKLNSRIDDLDLNLEDFAQRVNSDLVGKLVNLASRTAGFISKRFDGKLAKVTDSSLTDIFLAKSEVIAELYETREFGKAMREIMALADIANAYVADAAPWQLVKQDDKQDEAHQVCSNALNLFRILVTYLKPVLPKLAENVEGFLQLTLTWDNLGQDLAGHEIATFKALMQRIEPKSIEAIIDASKENLQATNTDAPKTEAPTQAVNQLELDPISPEISFEDFAKIDLRIARISKAEHIEKANKLLRLELDLGGDTKQVFAGIKSAYAPEDLVGKLTVMVANLAPRTMKFGDSEGMVLAAGPGGKDLFILEPHEGALPGMRVK.

A 'HIGH' region motif is present at residues 15–25 (PYANGPIHLGH). Positions 146, 149, 159, and 162 each coordinate Zn(2+). The short motif at 332 to 336 (KMSKS) is the 'KMSKS' region element. Lys335 contacts ATP. A tRNA-binding domain is found at 582 to 683 (DFAKIDLRIA…EGALPGMRVK (102 aa)).

The protein belongs to the class-I aminoacyl-tRNA synthetase family. MetG type 1 subfamily. As to quaternary structure, homodimer. Zn(2+) is required as a cofactor.

The protein localises to the cytoplasm. The catalysed reaction is tRNA(Met) + L-methionine + ATP = L-methionyl-tRNA(Met) + AMP + diphosphate. Its function is as follows. Is required not only for elongation of protein synthesis but also for the initiation of all mRNA translation through initiator tRNA(fMet) aminoacylation. The protein is Methionine--tRNA ligase of Shewanella frigidimarina (strain NCIMB 400).